The chain runs to 427 residues: SAC3 domain-containing protein 1 (427 aa).

2 stretches are compositionally biased toward basic and acidic residues: residues 1–10 (MGRFKGENRS) and 117–127 (ADPKRTVKEYS). Disordered stretches follow at residues 1-53 (MGRF…QDAV) and 101-143 (LHRL…LLRP). Pro residues predominate over residues 134–143 (PRPPPSLLRP). The region spanning 229–397 (QVQEGFGSLR…EGLPPPGAYH (169 aa)) is the PCI domain. Serine 425 carries the phosphoserine modification.

The protein belongs to the SAC3 family. May be part of a SEM1-containing complex. Present in spleen cells (at protein level).

Its subcellular location is the cytoplasm. It is found in the cytoskeleton. It localises to the microtubule organizing center. The protein resides in the centrosome. The protein localises to the spindle. Its function is as follows. Involved in centrosome duplication and mitotic progression. This is SAC3 domain-containing protein 1 (Sac3d1) from Mus musculus (Mouse).